The chain runs to 494 residues: Glutamyl-tRNA(Gln) amidotransferase subunit A (494 aa).

Catalysis depends on charge relay system residues lysine 88 and serine 163. The Acyl-ester intermediate role is filled by serine 187.

Belongs to the amidase family. GatA subfamily. As to quaternary structure, heterotrimer of A, B and C subunits.

It catalyses the reaction L-glutamyl-tRNA(Gln) + L-glutamine + ATP + H2O = L-glutaminyl-tRNA(Gln) + L-glutamate + ADP + phosphate + H(+). Its function is as follows. Allows the formation of correctly charged Gln-tRNA(Gln) through the transamidation of misacylated Glu-tRNA(Gln) in organisms which lack glutaminyl-tRNA synthetase. The reaction takes place in the presence of glutamine and ATP through an activated gamma-phospho-Glu-tRNA(Gln). This chain is Glutamyl-tRNA(Gln) amidotransferase subunit A, found in Corynebacterium diphtheriae (strain ATCC 700971 / NCTC 13129 / Biotype gravis).